Consider the following 199-residue polypeptide: dITP/XTP pyrophosphatase (199 aa).

8 to 13 is a binding site for substrate; it reads SGNAGK. Residue aspartate 69 is the Proton acceptor of the active site. Position 69 (aspartate 69) interacts with Mg(2+). Substrate-binding positions include serine 70, 154–157, lysine 177, and 182–183; these read FGYN and HR.

Belongs to the HAM1 NTPase family. As to quaternary structure, homodimer. It depends on Mg(2+) as a cofactor.

The catalysed reaction is XTP + H2O = XMP + diphosphate + H(+). It catalyses the reaction dITP + H2O = dIMP + diphosphate + H(+). The enzyme catalyses ITP + H2O = IMP + diphosphate + H(+). Functionally, pyrophosphatase that catalyzes the hydrolysis of nucleoside triphosphates to their monophosphate derivatives, with a high preference for the non-canonical purine nucleotides XTP (xanthosine triphosphate), dITP (deoxyinosine triphosphate) and ITP. Seems to function as a house-cleaning enzyme that removes non-canonical purine nucleotides from the nucleotide pool, thus preventing their incorporation into DNA/RNA and avoiding chromosomal lesions. In Xanthomonas oryzae pv. oryzae (strain KACC10331 / KXO85), this protein is dITP/XTP pyrophosphatase.